The chain runs to 222 residues: Protein-L-isoaspartate O-methyltransferase (222 aa).

Ser69 is a catalytic residue.

The protein belongs to the methyltransferase superfamily. L-isoaspartyl/D-aspartyl protein methyltransferase family.

It localises to the cytoplasm. It carries out the reaction [protein]-L-isoaspartate + S-adenosyl-L-methionine = [protein]-L-isoaspartate alpha-methyl ester + S-adenosyl-L-homocysteine. Its function is as follows. Catalyzes the methyl esterification of L-isoaspartyl residues in peptides and proteins that result from spontaneous decomposition of normal L-aspartyl and L-asparaginyl residues. It plays a role in the repair and/or degradation of damaged proteins. In Caulobacter vibrioides (strain NA1000 / CB15N) (Caulobacter crescentus), this protein is Protein-L-isoaspartate O-methyltransferase.